We begin with the raw amino-acid sequence, 186 residues long: FMN reductase (NADPH) (186 aa).

Belongs to the SsuE family.

The catalysed reaction is FMNH2 + NADP(+) = FMN + NADPH + 2 H(+). The sequence is that of FMN reductase (NADPH) (msuE) from Pseudomonas aeruginosa (strain ATCC 15692 / DSM 22644 / CIP 104116 / JCM 14847 / LMG 12228 / 1C / PRS 101 / PAO1).